A 231-amino-acid polypeptide reads, in one-letter code: ABC transporter ATP-binding protein YtrE (231 aa).

One can recognise an ABC transporter domain in the interval 4-231 (VQHIDHSFTI…VLKGGITVEV (228 aa)). Residue 42 to 49 (GRSGSGKS) participates in ATP binding.

Belongs to the ABC transporter superfamily. In terms of assembly, the complex is composed of 2 ATP-binding proteins (YtrB and YtrE), 2 transmembrane proteins (YtrC and YtrD) and a solute-binding protein (YtrF).

The protein resides in the cell membrane. Part of the ABC transporter complex YtrBCDEF that plays a role in acetoin utilization during stationary phase and sporulation. The sequence is that of ABC transporter ATP-binding protein YtrE (ytrE) from Bacillus subtilis (strain 168).